The primary structure comprises 179 residues: Large ribosomal subunit protein uL5 (179 aa).

It belongs to the universal ribosomal protein uL5 family. In terms of assembly, part of the 50S ribosomal subunit; part of the 5S rRNA/L5/L18/L25 subcomplex. Contacts the 5S rRNA and the P site tRNA. Forms a bridge to the 30S subunit in the 70S ribosome.

Its function is as follows. This is one of the proteins that bind and probably mediate the attachment of the 5S RNA into the large ribosomal subunit, where it forms part of the central protuberance. In the 70S ribosome it contacts protein S13 of the 30S subunit (bridge B1b), connecting the 2 subunits; this bridge is implicated in subunit movement. Contacts the P site tRNA; the 5S rRNA and some of its associated proteins might help stabilize positioning of ribosome-bound tRNAs. The protein is Large ribosomal subunit protein uL5 of Bordetella petrii (strain ATCC BAA-461 / DSM 12804 / CCUG 43448).